The following is a 590-amino-acid chain: UvrABC system protein C (590 aa).

A GIY-YIG domain is found at 14 to 91 (DQPGCYLMKD…IKKYDPKYNV (78 aa)). The UVR domain maps to 196–231 (QQIKKELTEKMQEAAEQLEFERAKELRDQIAYIDST).

It belongs to the UvrC family. As to quaternary structure, interacts with UvrB in an incision complex.

It localises to the cytoplasm. The UvrABC repair system catalyzes the recognition and processing of DNA lesions. UvrC both incises the 5' and 3' sides of the lesion. The N-terminal half is responsible for the 3' incision and the C-terminal half is responsible for the 5' incision. The sequence is that of UvrABC system protein C from Bacillus pumilus (strain SAFR-032).